The chain runs to 1586 residues: Pentafunctional AROM polypeptide (1586 aa).

Residues 1–384 form a 3-dehydroquinate synthase region; it reads MSEPTKISIL…HEPKASVVSN (384 aa). NAD(+) contacts are provided by residues 44–46, 81–84, 114–116, and Asp-119; these read DTN, ESSK, and GGV. Arg-130 lines the 7-phospho-2-dehydro-3-deoxy-D-arabino-heptonate pocket. 139–140 is a binding site for NAD(+); that stretch reads TT. 2 residues coordinate 7-phospho-2-dehydro-3-deoxy-D-arabino-heptonate: Asp-146 and Lys-152. Lys-161 lines the NAD(+) pocket. Position 162 (Asn-162) interacts with 7-phospho-2-dehydro-3-deoxy-D-arabino-heptonate. NAD(+)-binding positions include 179–182 and Asn-190; that span reads FLET. Glu-194 is a Zn(2+) binding site. 7-phospho-2-dehydro-3-deoxy-D-arabino-heptonate contacts are provided by residues 194-197 and Lys-250; that span reads EVIK. Catalysis depends on Glu-260, which acts as the Proton acceptor; for 3-dehydroquinate synthase activity. 7-phospho-2-dehydro-3-deoxy-D-arabino-heptonate is bound by residues 264 to 268 and His-271; that span reads RNLLN. His-271 is a binding site for Zn(2+). The Proton acceptor; for 3-dehydroquinate synthase activity role is filled by His-275. 7-phospho-2-dehydro-3-deoxy-D-arabino-heptonate-binding residues include His-287 and Lys-356. His-287 provides a ligand contact to Zn(2+). Residues 397–842 are EPSP synthase; it reads VHPGVPKSLN…WDALKQMFSV (446 aa). The active-site For EPSP synthase activity is the Cys-824. Positions 864-1056 are shikimate kinase; the sequence is SASVFIIGMR…KKKKHSFFVS (193 aa). Residue 871-878 coordinates ATP; sequence GMRGAGKT. The interval 1057-1277 is 3-dehydroquinase; the sequence is LTLPDVEPSG…AAPGQLSAAE (221 aa). Residue His-1180 is the Proton acceptor; for 3-dehydroquinate dehydratase activity of the active site. Lys-1208 serves as the catalytic Schiff-base intermediate with substrate; for 3-dehydroquinate dehydratase activity. The interval 1290 to 1586 is shikimate dehydrogenase; that stretch reads AQKFAIFGSP…SKHLDYFLSF (297 aa).

This sequence in the N-terminal section; belongs to the sugar phosphate cyclases superfamily. Dehydroquinate synthase family. In the 2nd section; belongs to the EPSP synthase family. It in the 3rd section; belongs to the shikimate kinase family. The protein in the 4th section; belongs to the type-I 3-dehydroquinase family. This sequence in the C-terminal section; belongs to the shikimate dehydrogenase family. Homodimer. Zn(2+) serves as cofactor.

It localises to the cytoplasm. It carries out the reaction 7-phospho-2-dehydro-3-deoxy-D-arabino-heptonate = 3-dehydroquinate + phosphate. It catalyses the reaction 3-dehydroquinate = 3-dehydroshikimate + H2O. The enzyme catalyses shikimate + NADP(+) = 3-dehydroshikimate + NADPH + H(+). The catalysed reaction is shikimate + ATP = 3-phosphoshikimate + ADP + H(+). It carries out the reaction 3-phosphoshikimate + phosphoenolpyruvate = 5-O-(1-carboxyvinyl)-3-phosphoshikimate + phosphate. It functions in the pathway metabolic intermediate biosynthesis; chorismate biosynthesis; chorismate from D-erythrose 4-phosphate and phosphoenolpyruvate: step 2/7. Its pathway is metabolic intermediate biosynthesis; chorismate biosynthesis; chorismate from D-erythrose 4-phosphate and phosphoenolpyruvate: step 3/7. It participates in metabolic intermediate biosynthesis; chorismate biosynthesis; chorismate from D-erythrose 4-phosphate and phosphoenolpyruvate: step 4/7. The protein operates within metabolic intermediate biosynthesis; chorismate biosynthesis; chorismate from D-erythrose 4-phosphate and phosphoenolpyruvate: step 5/7. It functions in the pathway metabolic intermediate biosynthesis; chorismate biosynthesis; chorismate from D-erythrose 4-phosphate and phosphoenolpyruvate: step 6/7. Its function is as follows. The AROM polypeptide catalyzes 5 consecutive enzymatic reactions in prechorismate polyaromatic amino acid biosynthesis. The sequence is that of Pentafunctional AROM polypeptide from Penicillium rubens (strain ATCC 28089 / DSM 1075 / NRRL 1951 / Wisconsin 54-1255) (Penicillium chrysogenum).